Here is a 763-residue protein sequence, read N- to C-terminus: MTDFSLYLVTDPVLGGGPEKVAGIVDSAISGGVSVVQLRDKNSGVEDVRAAAKELKELCDARGVALVVNDYLDIAVELGLHLHIGQGDTPYTQARELLPAHLELGLSIENLDQLHAVIAQCAETGVALPDVIGIGPVASTATKPDAAPALGVEGIAEIAAVAQDHGIASVAIGGVGLRNAAELAATPIDGLCVVSEIMTAANPAAAATRLRTAFQPTFSPETQTELSQTELQGAFVNSPSAPRVLSIAGTDPTGGAGIQADLKSIAAGGGYGMCVVTSLVAQNTHGVNTIHTPPLTFLEEQLEAVFSDVTVDAIKLGMLGSADTVDLVASWLGSHEHGPVVLDPVMIATSGDRLLDASAEESLRRLAVHVDVVTPNIPELAVLCDSAPAITMDEAIAQAQGFARTHDTIVIVKGGHLTGALADNAVVRPDGSVFQVENLRVNTTNSHGTGCSLSASLATKIAAGESVEKALEWSTRWLNEALRHADHLAVGTGNGPVDHGHLARRMTHAAETTPWAHLRAPRLDGATAASFTTPSTVKSPAPRIEPAGPFTRALWEASGDIIAGINSSDFITMLGDGTLRRPEFDFYIDQDAQYLAQYSRALARLSSIAPDSHAQIEWAQSAAECLVVEAELHRSYMAGKEVSAPSHITMAYTDFLIARTYTEDYVCGVAAVLPCYWLYAEIGLMLAEQNHDEHPYKDWLNTYSGEEFIAGTRAAIARLEKALENAGAEQRVDAARAFLSASVHEREFFDQATRHGWTMVGSS.

A thiamine-phosphate synthase region spans residues 1-210 (MTDFSLYLVT…ANPAAAATRL (210 aa)). 4-amino-2-methyl-5-(diphosphooxymethyl)pyrimidine contacts are provided by residues 37-41 (QLRDK) and N69. Mg(2+) contacts are provided by D70 and D88. S107 contacts 4-amino-2-methyl-5-(diphosphooxymethyl)pyrimidine. Residue 140-142 (TAT) participates in 2-[(2R,5Z)-2-carboxy-4-methylthiazol-5(2H)-ylidene]ethyl phosphate binding. K143 provides a ligand contact to 4-amino-2-methyl-5-(diphosphooxymethyl)pyrimidine. Residues G174 and 194 to 195 (VS) each bind 2-[(2R,5Z)-2-carboxy-4-methylthiazol-5(2H)-ylidene]ethyl phosphate. The interval 245 to 500 (LSIAGTDPTG…GTGNGPVDHG (256 aa)) is hydroxymethylpyrimidine/phosphomethylpyrimidine kinase. Q282 contributes to the 4-amino-5-hydroxymethyl-2-methylpyrimidine binding site. The tract at residues 550-763 (FTRALWEASG…RHGWTMVGSS (214 aa)) is thiaminase-2.

It in the N-terminal section; belongs to the thiamine-phosphate synthase family. This sequence in the central section; belongs to the ThiD family. The protein in the C-terminal section; belongs to the thiaminase-2 family. Requires Mg(2+) as cofactor.

The catalysed reaction is 2-[(2R,5Z)-2-carboxy-4-methylthiazol-5(2H)-ylidene]ethyl phosphate + 4-amino-2-methyl-5-(diphosphooxymethyl)pyrimidine + 2 H(+) = thiamine phosphate + CO2 + diphosphate. It catalyses the reaction 2-(2-carboxy-4-methylthiazol-5-yl)ethyl phosphate + 4-amino-2-methyl-5-(diphosphooxymethyl)pyrimidine + 2 H(+) = thiamine phosphate + CO2 + diphosphate. It carries out the reaction 4-methyl-5-(2-phosphooxyethyl)-thiazole + 4-amino-2-methyl-5-(diphosphooxymethyl)pyrimidine + H(+) = thiamine phosphate + diphosphate. The enzyme catalyses 4-amino-5-hydroxymethyl-2-methylpyrimidine + ATP = 4-amino-2-methyl-5-(phosphooxymethyl)pyrimidine + ADP + H(+). The catalysed reaction is 4-amino-2-methyl-5-(phosphooxymethyl)pyrimidine + ATP = 4-amino-2-methyl-5-(diphosphooxymethyl)pyrimidine + ADP. Its pathway is cofactor biosynthesis; thiamine diphosphate biosynthesis; 4-amino-2-methyl-5-diphosphomethylpyrimidine from 5-amino-1-(5-phospho-D-ribosyl)imidazole: step 3/3. The protein operates within cofactor biosynthesis; thiamine diphosphate biosynthesis; thiamine phosphate from 4-amino-2-methyl-5-diphosphomethylpyrimidine and 4-methyl-5-(2-phosphoethyl)-thiazole: step 1/1. Condenses 4-methyl-5-(beta-hydroxyethyl)thiazole monophosphate (THZ-P) and 2-methyl-4-amino-5-hydroxymethyl pyrimidine pyrophosphate (HMP-PP) to form thiamine monophosphate (TMP). Functionally, catalyzes the phosphorylation of hydroxymethylpyrimidine phosphate (HMP-P) to HMP-PP, and of HMP to HMP-P. The sequence is that of Thiamine biosynthesis multifunctional protein ThiED (theD) from Corynebacterium glutamicum (strain ATCC 13032 / DSM 20300 / JCM 1318 / BCRC 11384 / CCUG 27702 / LMG 3730 / NBRC 12168 / NCIMB 10025 / NRRL B-2784 / 534).